Consider the following 167-residue polypeptide: Cell number regulator 3 (167 aa).

A helical membrane pass occupies residues 67–84; that stretch reads GMTSCGTSAALFALIQWL.

Belongs to the cornifelin family. In terms of tissue distribution, expressed only in pollen.

It localises to the membrane. The chain is Cell number regulator 3 (CNR3) from Zea mays (Maize).